Here is a 64-residue protein sequence, read N- to C-terminus: Probable cytochrome c oxidase subunit 5C-3 (64 aa).

The chain crosses the membrane as a helical span at residues 15–34; sequence SVVKELVIGLTLGLAAGGLW.

It belongs to the cytochrome c oxidase subunit 5C family.

The protein localises to the mitochondrion inner membrane. Functionally, this protein is one of the nuclear-coded polypeptide chains of cytochrome c oxidase, the terminal oxidase in mitochondrial electron transport. The chain is Probable cytochrome c oxidase subunit 5C-3 from Arabidopsis thaliana (Mouse-ear cress).